A 197-amino-acid polypeptide reads, in one-letter code: Glycerol-3-phosphate acyltransferase (197 aa).

Helical transmembrane passes span 1 to 21, 78 to 98, 112 to 132, and 155 to 175; these read MNFLLLLLAAYALGSTPFAIV, PVEAALAGLAAFLGHVFSVFL, VLAGINAWVALSALFVWLAVA, and VLLGATPTVAVLALIAGILVW.

The protein belongs to the PlsY family. In terms of assembly, probably interacts with PlsX.

Its subcellular location is the cell inner membrane. It carries out the reaction an acyl phosphate + sn-glycerol 3-phosphate = a 1-acyl-sn-glycero-3-phosphate + phosphate. It participates in lipid metabolism; phospholipid metabolism. Its function is as follows. Catalyzes the transfer of an acyl group from acyl-phosphate (acyl-PO(4)) to glycerol-3-phosphate (G3P) to form lysophosphatidic acid (LPA). This enzyme utilizes acyl-phosphate as fatty acyl donor, but not acyl-CoA or acyl-ACP. The chain is Glycerol-3-phosphate acyltransferase from Aromatoleum aromaticum (strain DSM 19018 / LMG 30748 / EbN1) (Azoarcus sp. (strain EbN1)).